We begin with the raw amino-acid sequence, 407 residues long: Phosphopentomutase (407 aa).

Positions 11, 305, 310, 346, 347, and 358 each coordinate Mn(2+).

It belongs to the phosphopentomutase family. Requires Mn(2+) as cofactor.

It localises to the cytoplasm. It catalyses the reaction 2-deoxy-alpha-D-ribose 1-phosphate = 2-deoxy-D-ribose 5-phosphate. The enzyme catalyses alpha-D-ribose 1-phosphate = D-ribose 5-phosphate. The protein operates within carbohydrate degradation; 2-deoxy-D-ribose 1-phosphate degradation; D-glyceraldehyde 3-phosphate and acetaldehyde from 2-deoxy-alpha-D-ribose 1-phosphate: step 1/2. In terms of biological role, isomerase that catalyzes the conversion of deoxy-ribose 1-phosphate (dRib-1-P) and ribose 1-phosphate (Rib-1-P) to deoxy-ribose 5-phosphate (dRib-5-P) and ribose 5-phosphate (Rib-5-P), respectively. The protein is Phosphopentomutase of Legionella pneumophila (strain Corby).